A 269-amino-acid chain; its full sequence is Peptide deformylase 1B, chloroplastic (269 aa).

The N-terminal 51 residues, 1–51 (MAARLHLRLGPRLRGFASSFAPLLAAHPRALPLSRMGSVAPLAAARARRGF), are a transit peptide targeting the chloroplast. Fe cation-binding residues include cysteine 168 and histidine 210. Glutamate 211 is an active-site residue. Histidine 214 serves as a coordination point for Fe cation.

Belongs to the polypeptide deformylase family. Homodimer. Requires Fe(2+) as cofactor. As to expression, mainly expressed in mature leaves and sheaths.

The protein localises to the plastid. It localises to the chloroplast stroma. It is found in the mitochondrion. It catalyses the reaction N-terminal N-formyl-L-methionyl-[peptide] + H2O = N-terminal L-methionyl-[peptide] + formate. Its activity is regulated as follows. Inhibited by actinonin. In terms of biological role, removes the formyl group from the N-terminal Met of newly synthesized proteins. In Oryza sativa subsp. japonica (Rice), this protein is Peptide deformylase 1B, chloroplastic (PDF1B).